Reading from the N-terminus, the 366-residue chain is Phospho-N-acetylmuramoyl-pentapeptide-transferase (366 aa).

The next 10 helical transmembrane spans lie at 27–47, 71–91, 93–113, 134–154, 174–194, 205–225, 245–265, 268–288, 297–317, and 343–363; these read AALFTSALIVFLFGPAIISSL, TPTMGGLMILAGIVGSALLWA, LSSIYVVSTLLVTLGFGAIGF, LGIEFVIAAIAVFFMMQAAQS, LMLNLGYFFVLFGGFVIVGAG, GLAIVPVMIASAAFGLIAYLA, LAVILGAVIGAGLGFLWFNAP, AIFMGDTGSLALGGLIGTVAV, VIIGGLFVIETLSVIIQVFWF, and QVVIRFWIIAVILAMVGLSTL.

It belongs to the glycosyltransferase 4 family. MraY subfamily. The cofactor is Mg(2+).

The protein localises to the cell inner membrane. It carries out the reaction UDP-N-acetyl-alpha-D-muramoyl-L-alanyl-gamma-D-glutamyl-meso-2,6-diaminopimeloyl-D-alanyl-D-alanine + di-trans,octa-cis-undecaprenyl phosphate = di-trans,octa-cis-undecaprenyl diphospho-N-acetyl-alpha-D-muramoyl-L-alanyl-D-glutamyl-meso-2,6-diaminopimeloyl-D-alanyl-D-alanine + UMP. The protein operates within cell wall biogenesis; peptidoglycan biosynthesis. Functionally, catalyzes the initial step of the lipid cycle reactions in the biosynthesis of the cell wall peptidoglycan: transfers peptidoglycan precursor phospho-MurNAc-pentapeptide from UDP-MurNAc-pentapeptide onto the lipid carrier undecaprenyl phosphate, yielding undecaprenyl-pyrophosphoryl-MurNAc-pentapeptide, known as lipid I. The sequence is that of Phospho-N-acetylmuramoyl-pentapeptide-transferase from Sinorhizobium fredii (strain NBRC 101917 / NGR234).